Consider the following 167-residue polypeptide: 2-C-methyl-D-erythritol 2,4-cyclodiphosphate synthase (167 aa).

A divalent metal cation is bound by residues aspartate 15 and histidine 17. Residues 15–17 (DIH) and 43–44 (HS) contribute to the 4-CDP-2-C-methyl-D-erythritol 2-phosphate site. Residue histidine 51 participates in a divalent metal cation binding. Residues 65–67 (DIG), 141–144 (TTNE), and arginine 151 contribute to the 4-CDP-2-C-methyl-D-erythritol 2-phosphate site.

This sequence belongs to the IspF family. In terms of assembly, homotrimer. The cofactor is a divalent metal cation.

It carries out the reaction 4-CDP-2-C-methyl-D-erythritol 2-phosphate = 2-C-methyl-D-erythritol 2,4-cyclic diphosphate + CMP. It functions in the pathway isoprenoid biosynthesis; isopentenyl diphosphate biosynthesis via DXP pathway; isopentenyl diphosphate from 1-deoxy-D-xylulose 5-phosphate: step 4/6. Involved in the biosynthesis of isopentenyl diphosphate (IPP) and dimethylallyl diphosphate (DMAPP), two major building blocks of isoprenoid compounds. Catalyzes the conversion of 4-diphosphocytidyl-2-C-methyl-D-erythritol 2-phosphate (CDP-ME2P) to 2-C-methyl-D-erythritol 2,4-cyclodiphosphate (ME-CPP) with a corresponding release of cytidine 5-monophosphate (CMP). The protein is 2-C-methyl-D-erythritol 2,4-cyclodiphosphate synthase of Prochlorococcus marinus (strain MIT 9312).